Reading from the N-terminus, the 677-residue chain is UPF0313 protein RPA0679 (677 aa).

Residues alanine 335–arginine 601 enclose the Radical SAM core domain. [4Fe-4S] cluster is bound by residues cysteine 349, cysteine 353, and cysteine 356. The segment at arginine 635 to lysine 677 is disordered.

It belongs to the UPF0313 family. [4Fe-4S] cluster serves as cofactor.

This is UPF0313 protein RPA0679 from Rhodopseudomonas palustris (strain ATCC BAA-98 / CGA009).